Consider the following 509-residue polypeptide: Cytochrome P450 monooxygenase LUC2 (509 aa).

Residues 30–50 traverse the membrane as a helical segment; that stretch reads TKVLVTFLTIVIIAPRVFTVI. C456 contributes to the heme binding site.

It belongs to the cytochrome P450 family. The cofactor is heme.

It localises to the membrane. It participates in mycotoxin biosynthesis. Functionally, cytochrome P450 monooxygenase; part of the gene cluster that mediates the biosynthesis of the mycotoxin lucilactaene and the lucilactaene-related compound NG-391 that act as cell cycle inhibitors with potent growth inhibitory activity against malarial parasites, moderate growth inhibitory activity against cancer cells, and no activity against bacteria and fungi. Within the pathway, LUC2 performs C-20 methyl group hydroxylation of several intermediates. LUC2 does not perform the full oxidation of the C-20 methyl group into carboxylic acid, which is a prerequisite for the final methylation step. The pathway begins with the hybrid PKS-NRPS synthetase LUC5 which is responsible for the condensation of one acetyl-coenzyme A (CoA) unit with six malonyl-CoA units and the amide linkage of the arising heptaketide and homoserine, subsequently releasing the first intermediate prelucilactaene B. Both the cytochrome P450 monooxygenase LUC2 and the hydrolase LUC6 function in parallel in modification of prelucilactaene B. LUC6 may catalyze the 2-pyrrolidone ring formation to form prelucilactaene C from prelucilactaene B, followed by C-15 hydroxylation by the same enzyme to give prelucilactaene D, which is then converted to prelucilactaene E by epoxidation, and finally to prelucilactaene F by cyclization. Prelucilactane D, prelucilactaene E, and prelucilactaene F can be converted to dihydrolucilactaene, NG391, and lucilactaene, respectively, via C-20 methyl group hydroxylation by the cytochrome P450 monooxygenase LUC2. However, LUC2, unlike FUS8 in fusarin C biosynthesis, is not enough for the full oxidation of the C-20 methyl group into carboxylic acid, which is a prerequisite for the final methylation step. The aldehyde dehydrogenase LUC3 is involved in the biosynthesis by further oxidation of the C-20 alcoholic analog prelucilactaene G into a carboxylic derivative. This unidentified carboxylic derivative may be converted to demethyllucilactaene. As the last step, the methyltransferase LUC1 methylates the hydroxyl group at C-21 of demethyllucilactaene to generate lucilactaene. The sequence is that of Cytochrome P450 monooxygenase LUC2 from Fusarium sp.